Here is a 287-residue protein sequence, read N- to C-terminus: Large ribosomal subunit protein uL2 (287 aa).

Positions 221–287 (RGSVMNPCDH…SKRSRGGRDS (67 aa)) are disordered. Basic residues predominate over residues 258–287 (KTRKRNKPSNKFVLRKRRKTSKRSRGGRDS).

The protein belongs to the universal ribosomal protein uL2 family. As to quaternary structure, part of the 50S ribosomal subunit. Forms a bridge to the 30S subunit in the 70S ribosome.

Its function is as follows. One of the primary rRNA binding proteins. Required for association of the 30S and 50S subunits to form the 70S ribosome, for tRNA binding and peptide bond formation. It has been suggested to have peptidyltransferase activity; this is somewhat controversial. Makes several contacts with the 16S rRNA in the 70S ribosome. The sequence is that of Large ribosomal subunit protein uL2 from Synechococcus sp. (strain WH7803).